A 384-amino-acid chain; its full sequence is Succinyl-diaminopimelate desuccinylase (384 aa).

H71 is a binding site for Zn(2+). D73 is an active-site residue. Residue D104 participates in Zn(2+) binding. E139 functions as the Proton acceptor in the catalytic mechanism. Zn(2+) contacts are provided by E140, E168, and H357.

Belongs to the peptidase M20A family. DapE subfamily. As to quaternary structure, homodimer. The cofactor is Zn(2+). Co(2+) is required as a cofactor.

The enzyme catalyses N-succinyl-(2S,6S)-2,6-diaminopimelate + H2O = (2S,6S)-2,6-diaminopimelate + succinate. It functions in the pathway amino-acid biosynthesis; L-lysine biosynthesis via DAP pathway; LL-2,6-diaminopimelate from (S)-tetrahydrodipicolinate (succinylase route): step 3/3. Its function is as follows. Catalyzes the hydrolysis of N-succinyl-L,L-diaminopimelic acid (SDAP), forming succinate and LL-2,6-diaminopimelate (DAP), an intermediate involved in the bacterial biosynthesis of lysine and meso-diaminopimelic acid, an essential component of bacterial cell walls. The protein is Succinyl-diaminopimelate desuccinylase of Bradyrhizobium sp. (strain BTAi1 / ATCC BAA-1182).